The sequence spans 636 residues: Translation factor GUF1 homolog, chloroplastic (636 aa).

In terms of domain architecture, tr-type G spans 31-212 (NLARNFSIIA…AIVTKIPPPQ (182 aa)). Residues 40–47 (AHIDHGKS), 105–109 (DTPGH), and 159–162 (NKID) contribute to the GTP site.

Belongs to the TRAFAC class translation factor GTPase superfamily. Classic translation factor GTPase family. LepA subfamily.

Its subcellular location is the plastid. It is found in the chloroplast. The catalysed reaction is GTP + H2O = GDP + phosphate + H(+). Its function is as follows. Promotes chloroplast protein synthesis. May act as a fidelity factor of the translation reaction, by catalyzing a one-codon backward translocation of tRNAs on improperly translocated ribosomes. The sequence is that of Translation factor GUF1 homolog, chloroplastic from Oryza sativa subsp. indica (Rice).